A 449-amino-acid polypeptide reads, in one-letter code: UDP-N-acetylmuramoylalanine--D-glutamate ligase (449 aa).

117–123 serves as a coordination point for ATP; sequence GSNGKTT.

It belongs to the MurCDEF family.

It localises to the cytoplasm. It catalyses the reaction UDP-N-acetyl-alpha-D-muramoyl-L-alanine + D-glutamate + ATP = UDP-N-acetyl-alpha-D-muramoyl-L-alanyl-D-glutamate + ADP + phosphate + H(+). Its pathway is cell wall biogenesis; peptidoglycan biosynthesis. In terms of biological role, cell wall formation. Catalyzes the addition of glutamate to the nucleotide precursor UDP-N-acetylmuramoyl-L-alanine (UMA). The sequence is that of UDP-N-acetylmuramoylalanine--D-glutamate ligase from Exiguobacterium sibiricum (strain DSM 17290 / CCUG 55495 / CIP 109462 / JCM 13490 / 255-15).